The chain runs to 436 residues: Chromosomal replication initiator protein DnaA (436 aa).

Residues 1–80 (MSHEAVWQHV…QAPRFELRVV (80 aa)) are domain I, interacts with DnaA modulators. Positions 80 to 100 (VPGVVVQEDIFQAAPAEAPRP) are domain II. The interval 101–317 (KLNPKYTFEN…GALMRAIAFA (217 aa)) is domain III, AAA+ region. ATP contacts are provided by glycine 145, glycine 147, lysine 148, and threonine 149. A domain IV, binds dsDNA region spans residues 318–436 (SLNGVELTRA…LLRTLREACT (119 aa)).

It belongs to the DnaA family. In terms of assembly, oligomerizes as a right-handed, spiral filament on DNA at oriC.

The protein localises to the cytoplasm. Plays an essential role in the initiation and regulation of chromosomal replication. ATP-DnaA binds to the origin of replication (oriC) to initiate formation of the DNA replication initiation complex once per cell cycle. Binds the DnaA box (a 9 base pair repeat at the origin) and separates the double-stranded (ds)DNA. Forms a right-handed helical filament on oriC DNA; dsDNA binds to the exterior of the filament while single-stranded (ss)DNA is stabiized in the filament's interior. The ATP-DnaA-oriC complex binds and stabilizes one strand of the AT-rich DNA unwinding element (DUE), permitting loading of DNA polymerase. After initiation quickly degrades to an ADP-DnaA complex that is not apt for DNA replication. Binds acidic phospholipids. The protein is Chromosomal replication initiator protein DnaA of Thermus thermophilus (strain ATCC BAA-163 / DSM 7039 / HB27).